The chain runs to 504 residues: Signal transduction histidine-protein kinase/phosphatase MprB (504 aa).

The Cytoplasmic portion of the chain corresponds to 1-26 (MWWFRRRDRAPLRATSSLSLRWRVML). Residues 27-47 (LAMSMVAMVVVLMSFAVYAVI) traverse the membrane as a helical segment. Residues 48–163 (SAALYSDIDN…PTEAVMNKLR (116 aa)) lie on the Extracellular side of the membrane. The chain crosses the membrane as a helical span at residues 164–184 (WVLLIVGGIGVAVAAVAGGMV). The Cytoplasmic portion of the chain corresponds to 185-504 (TRAGLRPVGR…SVESQSTRAT (320 aa)). The region spanning 186–238 (RAGLRPVGRLTEAAERVARTDDLRPIPVFGSDELARLTEAFNLMLRALAESRE) is the HAMP domain. A Histidine kinase domain is found at 246–466 (DAGHELRTPL…SIYVLLPGRR (221 aa)). H249 carries the post-translational modification Phosphohistidine; by autocatalysis. Residues 471–504 (QLPGATAGARSTDIENSRGSANVISVESQSTRAT) are disordered. Residues 487–504 (SRGSANVISVESQSTRAT) are compositionally biased toward polar residues.

Requires Mg(2+) as cofactor. Mn(2+) serves as cofactor. In terms of processing, autophosphorylated.

The protein resides in the cell membrane. It catalyses the reaction ATP + protein L-histidine = ADP + protein N-phospho-L-histidine.. In terms of biological role, member of the two-component regulatory system MprB/MprA which contributes to maintaining a balance among several systems involved in stress resistance and is required for establishment and maintenance of persistent infection in the host. In response to environmental signals MprB acts both as a membrane-associated protein kinase that undergoes autophosphorylation and subsequently transfers the phosphate to MprA, and a protein phosphatase that dephosphorylates phospho-MprA. MprB/MprA up-regulates expression of mprA and pepD. The sequence is that of Signal transduction histidine-protein kinase/phosphatase MprB (mprB) from Mycobacterium bovis (strain ATCC BAA-935 / AF2122/97).